The following is a 149-amino-acid chain: UPF0102 protein Bpro_0391 (149 aa).

Residues 1 to 30 (MWFSRKQVVKPPPDGSRAQPGQVTTKSRGD) form a disordered region.

Belongs to the UPF0102 family.

This is UPF0102 protein Bpro_0391 from Polaromonas sp. (strain JS666 / ATCC BAA-500).